A 146-amino-acid polypeptide reads, in one-letter code: MKLHELQPAAGSRKAPKRVGRGTGSGLGRNAGKGEKGQNARSGGGVRPGFEGGQMPLYRRLPKRGFTNIFAKKYVSINVDRLNIFENGTEITPEVLLERRVVSKVLDGVKILGNGNLEKSLIVKGCKFSKSAIEKIEAAGGKVEVI.

Residues 1–54 (MKLHELQPAAGSRKAPKRVGRGTGSGLGRNAGKGEKGQNARSGGGVRPGFEGGQ) are disordered. Composition is skewed to gly residues over residues 21–31 (RGTGSGLGRNA) and 42–52 (SGGGVRPGFEG).

Belongs to the universal ribosomal protein uL15 family. Part of the 50S ribosomal subunit.

Its function is as follows. Binds to the 23S rRNA. This Clostridium botulinum (strain Alaska E43 / Type E3) protein is Large ribosomal subunit protein uL15.